A 233-amino-acid chain; its full sequence is Protein FAM204A (233 aa).

Disordered regions lie at residues 1–57 and 79–127; these read MWSG…PSTE and KFQE…ETQW. Residues 13–24 are compositionally biased toward acidic residues; it reads SDVELNSDDDTT. The segment covering 34–46 has biased composition (basic and acidic residues); that stretch reads EGKEDGTFEKTEM. Residues 98-109 are compositionally biased toward basic residues; it reads EKKKRKRSRKGK. Residues 144–164 adopt a coiled-coil conformation; that stretch reads VKRKKVEKSGLEKRIDQAVEE.

The protein is Protein FAM204A (FAM204A) of Bos taurus (Bovine).